A 151-amino-acid chain; its full sequence is Ribosome maturation factor RimP (151 aa).

The protein belongs to the RimP family.

It localises to the cytoplasm. Required for maturation of 30S ribosomal subunits. This chain is Ribosome maturation factor RimP, found in Shewanella woodyi (strain ATCC 51908 / MS32).